Consider the following 399-residue polypeptide: Large envelope protein (399 aa).

Position 1 is an N-acetylmethionine (Met-1). Gly-2 carries N-myristoyl glycine; by host lipidation. The interval 2–118 (GLSWTVPLEW…PPLRDTHPQA (117 aa)) is pre-S1. The interval 2-173 (GLSWTVPLEW…FSRIGDPAPN (172 aa)) is pre-S. The Virion surface; in external conformation portion of the chain corresponds to 2-180 (GLSWTVPLEW…APNMESITSG (179 aa)). Residues 2–252 (GLSWTVPLEW…PGYRWMCLRR (251 aa)) lie on the Intravirion; in internal conformation side of the membrane. The N-linked (GlcNAc...) asparagine glycan is linked to Ser-4. Residues 85–110 (KTLPADPPPASTNRQSGRQPTPITPP) are disordered. Residues 95–105 (STNRQSGRQPT) are compositionally biased toward polar residues. The pre-S2 stretch occupies residues 119 to 173 (MQWNSTTFHQALQDPRVRGLYFPAGGSSSGTVNPVPTTASLISSIFSRIGDPAPN). The chain crosses the membrane as a helical span at residues 181–201 (FLGPLLVLQAGFFLLTKILTI). At 202-252 (PQSLDSWWTSLNFLGGAPVCLGQNSQSPTSNHSPTSCPPICPGYRWMCLRR) the chain is on the intravirion; in external conformation side. The helical transmembrane segment at 253–273 (FIIFLFILLLCLIFLLVLLDY) threads the bilayer. Residues 274–347 (QGMLPVCPLI…WASARFSWLS (74 aa)) lie on the Virion surface side of the membrane. N-linked (GlcNAc...) asparagine; by host glycosylation is present at Asn-319. A helical membrane pass occupies residues 348-368 (LLVPFVQWFAGLSPTVWLSVI). At 369–374 (WMMWYW) the chain is on the intravirion side. Residues 375 to 397 (GPSLYDILSPFIPLLPIFFCLWV) form a helical membrane-spanning segment. Residues 398–399 (YI) lie on the Virion surface side of the membrane.

The protein belongs to the orthohepadnavirus major surface antigen family. In its internal form (Li-HBsAg), interacts with the capsid protein and with the isoform S. Interacts with host chaperone CANX. As to quaternary structure, associates with host chaperone CANX through its pre-S2 N glycan; this association may be essential for isoform M proper secretion. In terms of assembly, interacts with isoform L. Interacts with the antigens of satellite virus HDV (HDVAgs); this interaction is required for encapsidation of HDV genomic RNA. Isoform M is N-terminally acetylated by host at a ratio of 90%, and N-glycosylated by host at the pre-S2 region. In terms of processing, myristoylated.

The protein resides in the virion membrane. In terms of biological role, the large envelope protein exists in two topological conformations, one which is termed 'external' or Le-HBsAg and the other 'internal' or Li-HBsAg. In its external conformation the protein attaches the virus to cell receptors and thereby initiating infection. This interaction determines the species specificity and liver tropism. This attachment induces virion internalization predominantly through caveolin-mediated endocytosis. The large envelope protein also assures fusion between virion membrane and endosomal membrane. In its internal conformation the protein plays a role in virion morphogenesis and mediates the contact with the nucleocapsid like a matrix protein. Functionally, the middle envelope protein plays an important role in the budding of the virion. It is involved in the induction of budding in a nucleocapsid independent way. In this process the majority of envelope proteins bud to form subviral lipoprotein particles of 22 nm of diameter that do not contain a nucleocapsid. In Homo sapiens (Human), this protein is Large envelope protein.